Consider the following 298-residue polypeptide: MTQTVPYRCGRIAVIGRPNVGKSTLTNALVGTKISIVSNRPQTTRHRLLGIATFPEGQIILVDTPGLHREQKHPMNRLMNRTARGSLEDVDAALLVTESTHWNEEDTLAYNLLNDTGIPVVLVINKIDRFKDKSALLPFLTHINENHTFATIHPVSALKRKGLKTLVSDLLALLPEGGPMFSEDEITDRSQRFLASELVREQVMRQLGKELPYATTVEIEYFTENTGLFRIGALIWVERESQKAIVIGKGGVRLKEIGVKARQQMERLFQTKVFLETWVRVRKDWSNNEAALKTFGYE.

Residues 8-176 (RCGRIAVIGR…VSDLLALLPE (169 aa)) form the Era-type G domain. Residues 16-23 (GRPNVGKS) form a G1 region. Residue 16 to 23 (GRPNVGKS) coordinates GTP. The interval 42–46 (QTTRH) is G2. A G3 region spans residues 63–66 (DTPG). GTP-binding positions include 63–67 (DTPGL) and 125–128 (NKID). Residues 125–128 (NKID) are G4. The tract at residues 155 to 157 (VSA) is G5. One can recognise a KH type-2 domain in the interval 199 to 283 (VREQVMRQLG…FLETWVRVRK (85 aa)).

This sequence belongs to the TRAFAC class TrmE-Era-EngA-EngB-Septin-like GTPase superfamily. Era GTPase family. Monomer.

The protein localises to the cytoplasm. It is found in the cell inner membrane. An essential GTPase that binds both GDP and GTP, with rapid nucleotide exchange. Plays a role in 16S rRNA processing and 30S ribosomal subunit biogenesis and possibly also in cell cycle regulation and energy metabolism. In Xylella fastidiosa (strain Temecula1 / ATCC 700964), this protein is GTPase Era.